We begin with the raw amino-acid sequence, 323 residues long: Beta-ketoacyl-[acyl-carrier-protein] synthase III (323 aa).

Catalysis depends on residues cysteine 113 and histidine 250. Positions 251 to 255 are ACP-binding; sequence QANKR. Asparagine 280 is a catalytic residue.

Belongs to the thiolase-like superfamily. FabH family. In terms of assembly, homodimer.

The protein resides in the cytoplasm. The catalysed reaction is malonyl-[ACP] + acetyl-CoA + H(+) = 3-oxobutanoyl-[ACP] + CO2 + CoA. It functions in the pathway lipid metabolism; fatty acid biosynthesis. Catalyzes the condensation reaction of fatty acid synthesis by the addition to an acyl acceptor of two carbons from malonyl-ACP. Catalyzes the first condensation reaction which initiates fatty acid synthesis and may therefore play a role in governing the total rate of fatty acid production. Possesses both acetoacetyl-ACP synthase and acetyl transacylase activities. Its substrate specificity determines the biosynthesis of branched-chain and/or straight-chain of fatty acids. This Brucella anthropi (strain ATCC 49188 / DSM 6882 / CCUG 24695 / JCM 21032 / LMG 3331 / NBRC 15819 / NCTC 12168 / Alc 37) (Ochrobactrum anthropi) protein is Beta-ketoacyl-[acyl-carrier-protein] synthase III.